A 464-amino-acid polypeptide reads, in one-letter code: Gamma-aminobutyric acid receptor subunit rho-3 (464 aa).

The signal sequence occupies residues Met1–Ile15. Over Thr16–His263 the chain is Extracellular. Arg108 is a 4-aminobutanoate binding site. Asn123 carries N-linked (GlcNAc...) asparagine glycosylation. Ser172 lines the 4-aminobutanoate pocket. Cys181 and Cys195 are joined by a disulfide. Asn194 is a glycosylation site (N-linked (GlcNAc...) asparagine). Residue Glu200 participates in 4-aminobutanoate binding. A helical transmembrane segment spans residues Ile264–Val284. Residues Ser285–Arg296 lie on the Cytoplasmic side of the membrane. A helical transmembrane segment spans residues Val297 to Ser317. Topologically, residues Met318–Asp328 are extracellular. Residues Val329–Asn349 traverse the membrane as a helical segment. Positions Glu344–Arg445 are interaction with SQSTM1. Residues Tyr350 to Tyr443 lie on the Cytoplasmic side of the membrane. A helical transmembrane segment spans residues Ser444–Val464.

Belongs to the ligand-gated ion channel (TC 1.A.9) family. Gamma-aminobutyric acid receptor (TC 1.A.9.5) subfamily. GABRR3 sub-subfamily. As to quaternary structure, three rho subunits (rho-1/GBRR1, rho-2/GBRR2 and rho-3/GBRR3) coassemble either to form functional homopentamers or heteropentamers. Forms a ternary complex with SQSTM1 and PRKCZ. Expressed in retina.

The protein localises to the postsynaptic cell membrane. It is found in the cell membrane. It carries out the reaction chloride(in) = chloride(out). Activated by agonists in the following the potency order: muscimol &gt; TACP &gt; TACA &gt; thiomuscimol &gt; CAMP &gt; CACA, when forming a homopentamer. Inhibited by TPMPA, a rho-specific antagonist, when forming a homopentamer. Inhibited antagonists in the following the potency order: TAMP = TPMPA &gt; P4MPA = THIP &gt; 14AA &gt; 3-APA, when forming a homopentamer. In terms of biological role, rho subunit of the pentameric ligand-gated chloride channels responsible for mediating the effects of gamma-aminobutyric acid (GABA), the major inhibitory neurotransmitter in the brain. Rho-containing GABA-gated chloride channels are a subclass of GABA(A) receptors (GABAARs) entirely composed of rho subunits, where GABA molecules bind at the rho intersubunit interfaces. When activated by GABA, rho-GABAARs selectively allow the flow of chloride anions across the cell membrane down their electrochemical gradient. The chain is Gamma-aminobutyric acid receptor subunit rho-3 from Rattus norvegicus (Rat).